Consider the following 76-residue polypeptide: Putative membrane protein insertion efficiency factor (76 aa).

It belongs to the UPF0161 family.

The protein resides in the cell inner membrane. Its function is as follows. Could be involved in insertion of integral membrane proteins into the membrane. This chain is Putative membrane protein insertion efficiency factor, found in Paraburkholderia phymatum (strain DSM 17167 / CIP 108236 / LMG 21445 / STM815) (Burkholderia phymatum).